A 373-amino-acid chain; its full sequence is Trifolitoxin-processing protein TfxB (373 aa).

It to E.coli McbC which is involved in the processing of microcin B17 (MCCB17).

It localises to the cytoplasm. Functionally, the actions of the proteins TfxB, TfxD and TfxF are implicated in the processing of the inactive trifolitoxin (TfxA) precursor into the active peptide. This chain is Trifolitoxin-processing protein TfxB (tfxB), found in Rhizobium leguminosarum bv. trifolii.